The following is a 241-amino-acid chain: Chromosome partition protein MukE (241 aa).

The disordered stretch occupies residues 207 to 241 (DGEAATPDSLSQEKSAVKNDEEIEDELDEGLGEEE). The segment covering 227 to 241 (EEIEDELDEGLGEEE) has biased composition (acidic residues).

This sequence belongs to the MukE family. In terms of assembly, interacts, and probably forms a ternary complex, with MukF and MukB. The complex formation is stimulated by calcium or magnesium.

The protein resides in the cytoplasm. It is found in the nucleoid. Functionally, involved in chromosome condensation, segregation and cell cycle progression. May participate in facilitating chromosome segregation by condensation DNA from both sides of a centrally located replisome during cell division. Probably acts via its interaction with MukB and MukF. The polypeptide is Chromosome partition protein MukE (Mannheimia succiniciproducens (strain KCTC 0769BP / MBEL55E)).